The following is a 484-amino-acid chain: uncharacterized protein (484 aa).

An N-acetyltransferase domain is found at I334–L484.

This is an uncharacterized protein from Methanocaldococcus jannaschii (strain ATCC 43067 / DSM 2661 / JAL-1 / JCM 10045 / NBRC 100440) (Methanococcus jannaschii).